Reading from the N-terminus, the 98-residue chain is Large ribosomal subunit protein uL23 (98 aa).

The protein belongs to the universal ribosomal protein uL23 family. In terms of assembly, part of the 50S ribosomal subunit. Contacts protein L29, and trigger factor when it is bound to the ribosome.

In terms of biological role, one of the early assembly proteins it binds 23S rRNA. One of the proteins that surrounds the polypeptide exit tunnel on the outside of the ribosome. Forms the main docking site for trigger factor binding to the ribosome. This chain is Large ribosomal subunit protein uL23, found in Hydrogenovibrio crunogenus (strain DSM 25203 / XCL-2) (Thiomicrospira crunogena).